The following is a 504-amino-acid chain: MTLYLDGETLTIEDIKSFLQQQSKIEIIDDALERVKKSRAVVERIIENEETVYGITTGFGLFSDVRIDPTQYNELQVNLIRSHACGLGEPFSKEVALVMMILRLNTLLKGHSGATLELVRQLQFFINERIIPIIPQQGSLGASGDLAPLSHLALALIGEGKVLYRGEEKDSDDVLRELNRQPLNLQAKEGLALINGTQAMTAQGVISYIEAEDLGYQSEWIAALTHQSLNGIIDAYRHDVHAVRNFQEQINVAARMRDWLEGSTLTTRQSEIRVQDAYTLRCIPQIHGASFQVFNYVKQQLEFEMNAANDNPLIFEEANETFVISGGNFHGQPIAFALDHLKLGVSELANVSERRLERLVNPQLNGDLPAFLSPEPGLQSGAMIMQYAAASLVSENKTLAHPASVDSITSSANQEDHVSMGTTAARHGYQIIENARRVLAIECVIALQAAELKGVEGLSPKTRRKYDEFRSIVPSITHDRQFHKDIEAVAQYLKQSIYQTTACH.

The 5-imidazolinone (Ala-Gly) cross-link spans 142–144; that stretch reads ASG. Ser-143 is modified (2,3-didehydroalanine (Ser)).

This sequence belongs to the PAL/histidase family. Post-translationally, contains an active site 4-methylidene-imidazol-5-one (MIO), which is formed autocatalytically by cyclization and dehydration of residues Ala-Ser-Gly.

It localises to the cytoplasm. The enzyme catalyses L-histidine = trans-urocanate + NH4(+). Its pathway is amino-acid degradation; L-histidine degradation into L-glutamate; N-formimidoyl-L-glutamate from L-histidine: step 1/3. The chain is Histidine ammonia-lyase from Staphylococcus aureus (strain USA300).